Consider the following 582-residue polypeptide: MAAAASPPRGFCRSVHWFRRGLRLHDNPALQAALRGAASLRCIYILDPWFAASSAVGINRWRFLLQSLEDLDNSLRKLNSRLFVVRGQPTDVFPRLFKEWGVTRLAFEYDSEPFGKERDAAIIKLAKEAGVEVVIENSHTLYNLDRIIELNGNKPPLTYKRFQAIISRMELPKKPVSSIVSQQMETCKVDIQENHDDVYGVPSLEELGFPTDGLAPAVWQGGETEALARLDKHLERKAWVANYERPRMNANSLLASPTGLSPYLRFGCLSCRLFYYRLWELYKKVKRNSTPPLSLYGQLLWREFFYTAATNNPKFDRMEGNPICIQIPWDKNPEALAKWAEGKTGFPWIDAIMTQLRQEGWIHHLARHAVACFLTRGDLWISWESGVRVFDELLLDADFSVNAGSWMWLSCSAFFQQFFHCYCPVGFGRRTDPSGDYVKRYLPKLKGFPSRYIYEPWNAPESVQKAAKCIIGVDYPKPMVNHAETSRLNIERMKQIYQQLSRYRGLCLLASVPSCVEDLSGPVTDSAPGQGSSTSTAVRLPQSDQASPKRKHEGAEELCTEELYKRAKVTGLPAPEIPGKSS.

The 130-residue stretch at 12-141 (CRSVHWFRRG…EVVIENSHTL (130 aa)) folds into the Photolyase/cryptochrome alpha/beta domain. Residues Ser-261, Gln-298, His-364, and 396–398 (DAD) each bind FAD. Residues 521-559 (GPVTDSAPGQGSSTSTAVRLPQSDQASPKRKHEGAEELC) form a disordered region. The segment covering 527-546 (APGQGSSTSTAVRLPQSDQA) has biased composition (polar residues).

Belongs to the DNA photolyase class-1 family. Component of the circadian core oscillator, which includes the CRY proteins, CLOCK or NPAS2, BMAL1 or BMAL2, CSNK1E, and the PER proteins. FAD is required as a cofactor. Requires (6R)-5,10-methylene-5,6,7,8-tetrahydrofolate as cofactor. In terms of tissue distribution, expressed in the pineal gland.

The protein resides in the cytoplasm. It is found in the nucleus. Functionally, transcriptional repressor which forms a core component of the circadian clock. The circadian clock, an internal time-keeping system, regulates various physiological processes through the generation of approximately 24 hour circadian rhythms in gene expression, which are translated into rhythms in metabolism and behavior. It is derived from the Latin roots 'circa' (about) and 'diem' (day) and acts as an important regulator of a wide array of physiological functions including metabolism, sleep, body temperature, blood pressure, endocrine, immune, cardiovascular, and renal function. Consists of two major components: the central clock, residing in the suprachiasmatic nucleus (SCN) of the brain, and the peripheral clocks that are present in nearly every tissue and organ system. Both the central and peripheral clocks can be reset by environmental cues, also known as Zeitgebers (German for 'timegivers'). The predominant Zeitgeber for the central clock is light, which is sensed by retina and signals directly to the SCN. The central clock entrains the peripheral clocks through neuronal and hormonal signals, body temperature and feeding-related cues, aligning all clocks with the external light/dark cycle. Circadian rhythms allow an organism to achieve temporal homeostasis with its environment at the molecular level by regulating gene expression to create a peak of protein expression once every 24 hours to control when a particular physiological process is most active with respect to the solar day. Transcription and translation of core clock components (CLOCK, NPAS2, BMAL1, BMAL2, PER1, PER2, PER3, CRY1 and CRY2) plays a critical role in rhythm generation, whereas delays imposed by post-translational modifications (PTMs) are important for determining the period (tau) of the rhythms (tau refers to the period of a rhythm and is the length, in time, of one complete cycle). A diurnal rhythm is synchronized with the day/night cycle, while the ultradian and infradian rhythms have a period shorter and longer than 24 hours, respectively. Disruptions in the circadian rhythms contribute to the pathology of cardiovascular diseases, cancer, metabolic syndromes and aging. A transcription/translation feedback loop (TTFL) forms the core of the molecular circadian clock mechanism. Transcription factors, CLOCK or NPAS2 and BMAL1 or BMAL2, form the positive limb of the feedback loop, act in the form of a heterodimer and activate the transcription of core clock genes and clock-controlled genes (involved in key metabolic processes), harboring E-box elements (5'-CACGTG-3') within their promoters. The core clock genes: PER1/2/3 and CRY1/2 which are transcriptional repressors form the negative limb of the feedback loop and interact with the CLOCK|NPAS2-BMAL1|BMAL2 heterodimer inhibiting its activity and thereby negatively regulating their own expression. This heterodimer also activates nuclear receptors NR1D1/2, RORA/B/G, which form a second feedback loop and which activate and repress BMAL1 transcription, respectively. CRY1 and CRY2 have redundant functions but also differential and selective contributions at least in defining the pace of the SCN circadian clock and its circadian transcriptional outputs. Less potent transcriptional repressor in cerebellum and liver than CRY1, though less effective in lengthening the period of the SCN oscillator. Seems to play a critical role in tuning SCN circadian period by opposing the action of CRY1. With CRY1, dispensable for circadian rhythm generation but necessary for the development of intercellular networks for rhythm synchrony. Represses CLOCK-BMAL1-mediated transcriptional activation. The sequence is that of Cryptochrome-2 (CRY2) from Gallus gallus (Chicken).